Reading from the N-terminus, the 231-residue chain is Large ribosomal subunit protein uL1 (231 aa).

The protein belongs to the universal ribosomal protein uL1 family. As to quaternary structure, part of the 50S ribosomal subunit.

Binds directly to 23S rRNA. The L1 stalk is quite mobile in the ribosome, and is involved in E site tRNA release. Functionally, protein L1 is also a translational repressor protein, it controls the translation of the L11 operon by binding to its mRNA. In Alkalilimnicola ehrlichii (strain ATCC BAA-1101 / DSM 17681 / MLHE-1), this protein is Large ribosomal subunit protein uL1.